A 761-amino-acid polypeptide reads, in one-letter code: Xaa-Pro dipeptidyl-peptidase (761 aa).

Active-site charge relay system residues include serine 349, aspartate 469, and histidine 499.

This sequence belongs to the peptidase S15 family. In terms of assembly, homodimer.

The protein localises to the cytoplasm. The catalysed reaction is Hydrolyzes Xaa-Pro-|- bonds to release unblocked, N-terminal dipeptides from substrates including Ala-Pro-|-p-nitroanilide and (sequentially) Tyr-Pro-|-Phe-Pro-|-Gly-Pro-|-Ile.. Functionally, removes N-terminal dipeptides sequentially from polypeptides having unsubstituted N-termini provided that the penultimate residue is proline. This Streptococcus equi subsp. zooepidemicus (strain H70) protein is Xaa-Pro dipeptidyl-peptidase.